The chain runs to 1141 residues: LRR receptor-like serine/threonine-protein kinase RGI1 (1141 aa).

The first 33 residues, M1–A33, serve as a signal peptide directing secretion. Residues E34–L726 lie on the Extracellular side of the membrane. The cysteines at positions 69 and 77 are disulfide-linked. A glycan (N-linked (GlcNAc...) asparagine) is linked at N71. LRR repeat units lie at residues Q80–F104, R105–C128, G130–L152, R153–C176, K178–L200, G202–C225, S226–L249, K250–C273, E275–L297, T298–C321, S322–L345, F347–C369, S370–T392, T394–C417, T418–L441, N443–N464, C465–L489, K490–C513, S514–L537, S538–L561, S563–C585, S586–I609, E610–L634, K636–I657, and E658–Q682. N-linked (GlcNAc...) asparagine glycosylation is present at N116. 2 consecutive short sequence motifs (small peptide recognition) follow at residues F185 to D186 and R207 to G210. Residue N227 is glycosylated (N-linked (GlcNAc...) asparagine). 2 consecutive short sequence motifs (small peptide recognition) follow at residues V230–E235 and Y258. A glycan (N-linked (GlcNAc...) asparagine) is linked at N272. The Small peptide recognition motif lies at F280 to Y282. N320 is a glycosylation site (N-linked (GlcNAc...) asparagine). 2 short sequence motifs (small peptide recognition) span residues D328–L331 and E350–M352. An N-linked (GlcNAc...) asparagine glycan is attached at N368. Short sequence motifs (small peptide recognition) lie at residues L398–W402 and D424–R427. N443 carries an N-linked (GlcNAc...) asparagine glycan. The Small peptide recognition signature appears at K446 to I450. N464 is a glycosylation site (N-linked (GlcNAc...) asparagine). Residues R470 to R472 carry the Small peptide recognition motif. An N-linked (GlcNAc...) asparagine glycan is attached at N523. N-linked (GlcNAc...) asparagine glycosylation occurs at N617. A glycan (N-linked (GlcNAc...) asparagine) is linked at N664. A helical membrane pass occupies residues T727–I747. Topologically, residues R748–E1141 are cytoplasmic. Positions L786–A1074 constitute a Protein kinase domain. ATP is bound by residues I792–V800 and K814. Phosphotyrosine is present on residues Y868 and Y906. The Proton acceptor role is filled by D919. A phosphotyrosine mark is found at Y962 and Y969.

It belongs to the protein kinase superfamily. Ser/Thr protein kinase family. In terms of assembly, interacts with beet curly top virus AL4/C4. Binds to RGF peptides such as RGF1, GLV5/CLEL1/RGF2, GLV7/CLEL3/RGF3, GLV3/RGF4, GLV10/CLEL7/RGF5 and RGF10/CLELN; these interactions trigger the formation of heterodimers with SERK1, SERK2 or BAK1/SERK3 via LRR regions. Interacts with UBP13. Post-translationally, phosphorylated and ubiquitinated upon interaction with RGF1, thus leading to activation a subsequent degradation. Stabilized by UBP12 and UBP13-mediated deubiquitination. In terms of processing, autophosphorylated. In terms of tissue distribution, expressed in roots.

It localises to the cell membrane. The catalysed reaction is L-seryl-[protein] + ATP = O-phospho-L-seryl-[protein] + ADP + H(+). It catalyses the reaction L-threonyl-[protein] + ATP = O-phospho-L-threonyl-[protein] + ADP + H(+). In terms of biological role, together with RGI2, RGI3, RGI4 and RGI5, acts as a receptor of RGF peptides (e.g. RGF1, GLV5/CLEL1/RGF2, GLV7/CLEL3/RGF3, GLV3/RGF4, GLV10/CLEL7/RGF5 and RGF10/CLELN), peptide hormones which maintain the postembryonic root stem cell niche by regulating the expression levels and patterns of the transcription factor PLETHORA (PLT, e.g. PLT1 and PLT2). Links RGF peptides signal with their downstream components. The sequence is that of LRR receptor-like serine/threonine-protein kinase RGI1 from Arabidopsis thaliana (Mouse-ear cress).